Reading from the N-terminus, the 277-residue chain is Large ribosomal subunit protein uL2 (277 aa).

Disordered stretches follow at residues 35-57 (RPLH…QGGG) and 222-277 (GVAM…NRRR). Composition is skewed to basic residues over residues 37 to 57 (LHSK…QGGG) and 268 to 277 (VRRRKQNRRR).

Belongs to the universal ribosomal protein uL2 family. In terms of assembly, part of the 50S ribosomal subunit. Forms a bridge to the 30S subunit in the 70S ribosome.

In terms of biological role, one of the primary rRNA binding proteins. Required for association of the 30S and 50S subunits to form the 70S ribosome, for tRNA binding and peptide bond formation. It has been suggested to have peptidyltransferase activity; this is somewhat controversial. Makes several contacts with the 16S rRNA in the 70S ribosome. The sequence is that of Large ribosomal subunit protein uL2 from Frankia casuarinae (strain DSM 45818 / CECT 9043 / HFP020203 / CcI3).